A 790-amino-acid polypeptide reads, in one-letter code: IQ motif and ubiquitin-like domain-containing protein (790 aa).

Residues 1–17 (MSNQPKKYETQNIANST) are compositionally biased toward polar residues. Positions 1-49 (MSNQPKKYETQNIANSTEESDAFDIVTIPVPSEEPQESDQTEEHESGIE) are disordered. A Ubiquitin-like domain is found at 130-206 (ATVKVVLIPV…IQVEIFSTNP (77 aa)). The 30-residue stretch at 337-366 (RLKAVIVIQTYYRQWHAKIFVEDLRRQKSL) folds into the IQ domain.

In terms of assembly, component of the axonemal radial spoke 1 (RS1) complex, at least composed of spoke head proteins RSPH1, RSPH3, RSPH9 and the cilia-specific component RSPH4A or sperm-specific component RSPH6A, spoke stalk proteins RSPH14, DNAJB13, DYDC1, ROPN1L and NME5, and the anchor protein IQUB. Does not appear to be part of radial spoke complexes 2 or 3 (RS2 or RS3). Interacts with CALM1. Interacts with DNAJB13. Interacts with DYNLL2. Interacts with NME5. Interacts with RSPH3. Interacts with RSPH9. Interacts with ZMYND10. Interacts with calmodulin; the interaction occurs in conditions of low but not high calcium.

It localises to the cytoplasm. Its subcellular location is the cytoskeleton. It is found in the flagellum axoneme. The protein resides in the cell projection. The protein localises to the cilium. Adapter protein that anchors the radial spoke 1 (RS1) complex to the A microtubule of outer doublet microtubules in axonemes. The triple radial spokes (RS1, RS2 and RS3) are required to modulate beating of the sperm flagellum. May play a role in inhibiting signaling via MAPK1/ERK2 and MAPK3/ERK1. Additionally, may play a role in the functioning of cilia. Not required for the functioning of tracheal or ependymal cilia. This is IQ motif and ubiquitin-like domain-containing protein (IQUB) from Macaca fascicularis (Crab-eating macaque).